Consider the following 1358-residue polypeptide: Xanthine dehydrogenase/oxidase (1358 aa).

A 2Fe-2S ferredoxin-type domain is found at 8–95 (DELVFFVNGK…HVAVTTVEGI (88 aa)). Residues cysteine 47, cysteine 52, cysteine 55, cysteine 77, cysteine 117, cysteine 120, cysteine 152, and cysteine 154 each coordinate [2Fe-2S] cluster. The FAD-binding PCMH-type domain occupies 255–440 (FKGERVMWIQ…LSVEIPYSKE (186 aa)). FAD contacts are provided by residues 283-290 (LVVGNTEV), phenylalanine 363, 373-377 (ALGGN), aspartate 386, leucine 430, and lysine 448. Mo-molybdopterin-binding residues include glutamine 796 and phenylalanine 827. Substrate-binding residues include glutamate 831 and arginine 909. Position 941 (arginine 941) interacts with Mo-molybdopterin. Substrate is bound by residues phenylalanine 943 and threonine 1039. Alanine 1108 serves as a coordination point for Mo-molybdopterin. The active-site Proton acceptor is glutamate 1290.

It belongs to the xanthine dehydrogenase family. As to quaternary structure, homodimer. FAD serves as cofactor. Mo-molybdopterin is required as a cofactor. Requires [2Fe-2S] cluster as cofactor. In terms of tissue distribution, detected in liver (at protein level).

The protein localises to the peroxisome. It localises to the cytoplasm. It catalyses the reaction xanthine + NAD(+) + H2O = urate + NADH + H(+). The enzyme catalyses hypoxanthine + NAD(+) + H2O = xanthine + NADH + H(+). The catalysed reaction is xanthine + O2 + H2O = urate + H2O2. Key enzyme in purine degradation. Catalyzes the oxidation of hypoxanthine to xanthine. Catalyzes the oxidation of xanthine to uric acid. Contributes to the generation of reactive oxygen species. In Gallus gallus (Chicken), this protein is Xanthine dehydrogenase/oxidase (XDH).